We begin with the raw amino-acid sequence, 141 residues long: Cystatin (141 aa).

The first 26 residues, M1 to M26, serve as a signal peptide directing secretion. Residues G29–W129 form the Cystatin domain. Residues Q73–G77 carry the Secondary area of contact motif. 2 cysteine pairs are disulfide-bonded: C91–C107 and C120–C140.

Belongs to the cystatin family. As to expression, expressed at a low level by the venom gland (at protein level).

The protein localises to the secreted. Functionally, inhibits various C1 cysteine proteases including cathepsin L, papain and cathepsin B. This protein has no toxic activity and its function in the venom is unknown. It may play a role as a housekeeping or regulatory protein. The chain is Cystatin from Hoplocephalus stephensii (Stephens's banded snake).